Consider the following 345-residue polypeptide: MTDKTSLSYKDAGVDIDAGNALVGRIKGVVKKTRRPEVMGGLGGFGALCALPQKYREPVLVSGTDGVGTKLRLAMDLKRHDTIGIDLVAMCVNDLVVQGAEPLFFLDYYATGKLDVNTASAVISGIAEGCLQSGCSLVGGETAEMPGMYHGEDYDVAGFCVGVVEKSEIIDGSKVSDGDVLIALGSSGPHSNGYSLVRKILEVSGCDPQTTELDGKPLADHLLAPTRIYVKSVLELIEKVDVHAIAHLTGGGFWENIPRVLPDNTQAVIDESSWQWPEVFNWLQTAGNVERHEMYRTFNCGVGMIIALPAPEVDKALALLNANGENAWKIGIIKTSDSEQRVVIE.

This sequence belongs to the AIR synthase family.

The protein resides in the cytoplasm. The catalysed reaction is 2-formamido-N(1)-(5-O-phospho-beta-D-ribosyl)acetamidine + ATP = 5-amino-1-(5-phospho-beta-D-ribosyl)imidazole + ADP + phosphate + H(+). The protein operates within purine metabolism; IMP biosynthesis via de novo pathway; 5-amino-1-(5-phospho-D-ribosyl)imidazole from N(2)-formyl-N(1)-(5-phospho-D-ribosyl)glycinamide: step 2/2. In Escherichia coli O45:K1 (strain S88 / ExPEC), this protein is Phosphoribosylformylglycinamidine cyclo-ligase.